The primary structure comprises 441 residues: MQQGSAPKISFVSLGCPKALVDSERIITRLRAEGYELARKHDGADVVIVNTCGFLDSAKQESLSAIGSAMAENGKVIVTGCMGAEPEQIEQAYPGVLSITGPQQYESVLEAVHRASPPIHNPHLDLVPPQGIKLTPRHYAYLKISEGCNNRCTFCIIPKLRGDLVSRPAADVLREAERLVAAGVKELLVISQDTSAYGLDLKYAESSWKDRSVRARFLDLARELGELGAWVRLHYVYPYPHVDEVVGLMAEGRVLPYLDIPFQHASPNVLKAMRRPAAQDKTLDRIKSWRAACPDLALRSTFIVGFPGETDADFAYLLDWLDEAEIDRLGCFKYEPVAGATSNALPDQVPDEVKQERWNALMARQQKISARRLKRKVGTRQQIIIDEVGPTVAKGRSKADAPEIDGSVYVSSRRPLRVGEIVTARIERADEYDLHGTVAGF.

The 111-residue stretch at 7–117 folds into the MTTase N-terminal domain; that stretch reads PKISFVSLGC…VLEAVHRASP (111 aa). 6 residues coordinate [4Fe-4S] cluster: C16, C52, C81, C148, C152, and C155. Residues 134-371 form the Radical SAM core domain; that stretch reads LTPRHYAYLK…MARQQKISAR (238 aa). A TRAM domain is found at 374–440; it reads KRKVGTRQQI…EYDLHGTVAG (67 aa).

The protein belongs to the methylthiotransferase family. RimO subfamily. [4Fe-4S] cluster serves as cofactor.

The protein localises to the cytoplasm. The catalysed reaction is L-aspartate(89)-[ribosomal protein uS12]-hydrogen + (sulfur carrier)-SH + AH2 + 2 S-adenosyl-L-methionine = 3-methylsulfanyl-L-aspartate(89)-[ribosomal protein uS12]-hydrogen + (sulfur carrier)-H + 5'-deoxyadenosine + L-methionine + A + S-adenosyl-L-homocysteine + 2 H(+). Catalyzes the methylthiolation of an aspartic acid residue of ribosomal protein uS12. This Bradyrhizobium sp. (strain BTAi1 / ATCC BAA-1182) protein is Ribosomal protein uS12 methylthiotransferase RimO.